The following is a 349-amino-acid chain: Protein O-mannose kinase (349 aa).

At 1–19 (MGQQHGTRNGLTHRELPRG) the chain is on the cytoplasmic side. A helical; Signal-anchor for type II membrane protein transmembrane segment spans residues 20-42 (VGLLLAMALMNVALYLCLDQLFI). Topologically, residues 43 to 349 (SPGRSTADSR…TVMSQTKEML (307 aa)) are lumenal. 3 N-linked (GlcNAc...) asparagine glycosylation sites follow: N66, N164, and N219. Residues 80-349 (VRQLKRVGEG…TVMSQTKEML (270 aa)) form the Protein kinase domain.

It belongs to the protein kinase superfamily. Ser/Thr protein kinase family. STKL subfamily.

The protein resides in the endoplasmic reticulum membrane. The catalysed reaction is 3-O-[beta-D-GalNAc-(1-&gt;3)-beta-D-GlcNAc-(1-&gt;4)-alpha-D-Man]-L-Thr-[protein] + ATP = 3-O-[beta-D-GalNAc-(1-&gt;3)-beta-D-GlcNAc-(1-&gt;4)-(O-6-P-alpha-D-Man)]-Thr-[protein] + ADP + H(+). Its function is as follows. Protein O-mannose kinase that specifically mediates phosphorylation at the 6-position of an O-mannose of the trisaccharide (N-acetylgalactosamine (GalNAc)-beta-1,3-N-acetylglucosamine (GlcNAc)-beta-1,4-mannose) to generate phosphorylated O-mannosyl trisaccharide (N-acetylgalactosamine-beta-1,3-N-acetylglucosamine-beta-1,4-(phosphate-6-)mannose). Phosphorylated O-mannosyl trisaccharide is a carbohydrate structure present in alpha-dystroglycan (DAG1), which is required for binding laminin G-like domain-containing extracellular proteins with high affinity. Only shows kinase activity when the GalNAc-beta-3-GlcNAc-beta-terminus is linked to the 4-position of O-mannose, suggesting that this disaccharide serves as the substrate recognition motif. In Mus musculus (Mouse), this protein is Protein O-mannose kinase (Pomk).